The following is a 426-amino-acid chain: 26S proteasome regulatory subunit 7 homolog A (426 aa).

Position 209–216 (209–216 (GPPGTGKT)) interacts with ATP. Residues K400 and K415 each participate in a glycyl lysine isopeptide (Lys-Gly) (interchain with G-Cter in ubiquitin) cross-link.

Belongs to the AAA ATPase family. In terms of assembly, component of the 19S regulatory particle (RP/PA700) base subcomplex of the 26S proteasome. The 26S proteasome is composed of a core protease (CP), known as the 20S proteasome, capped at one or both ends by the 19S regulatory particle (RP/PA700). The RP/PA700 complex is composed of at least 17 different subunits in two subcomplexes, the base and the lid, which form the portions proximal and distal to the 20S proteolytic core, respectively.

Its subcellular location is the cytoplasm. The protein resides in the nucleus. Functionally, the 26S proteasome is involved in the ATP-dependent degradation of ubiquitinated proteins. The regulatory (or ATPase) complex confers ATP dependency and substrate specificity to the 26S complex. The polypeptide is 26S proteasome regulatory subunit 7 homolog A (RPT1A) (Arabidopsis thaliana (Mouse-ear cress)).